The primary structure comprises 266 residues: Translation initiation factor 2 subunit alpha (266 aa).

Positions 12-83 (GEILIATVKQ…RKGTVDVSLK (72 aa)) constitute an S1 motif domain.

Belongs to the eIF-2-alpha family. In terms of assembly, heterotrimer composed of an alpha, a beta and a gamma chain.

Its function is as follows. eIF-2 functions in the early steps of protein synthesis by forming a ternary complex with GTP and initiator tRNA. This Saccharolobus solfataricus (strain ATCC 35092 / DSM 1617 / JCM 11322 / P2) (Sulfolobus solfataricus) protein is Translation initiation factor 2 subunit alpha.